Here is a 34-residue protein sequence, read N- to C-terminus: Photosystem II reaction center protein M (34 aa).

Residues 5 to 25 (ILAFIATALFILVPTAFLLII) traverse the membrane as a helical segment.

This sequence belongs to the PsbM family. As to quaternary structure, PSII is composed of 1 copy each of membrane proteins PsbA, PsbB, PsbC, PsbD, PsbE, PsbF, PsbH, PsbI, PsbJ, PsbK, PsbL, PsbM, PsbT, PsbX, PsbY, PsbZ, Psb30/Ycf12, at least 3 peripheral proteins of the oxygen-evolving complex and a large number of cofactors. It forms dimeric complexes.

The protein resides in the plastid. It is found in the chloroplast thylakoid membrane. In terms of biological role, one of the components of the core complex of photosystem II (PSII). PSII is a light-driven water:plastoquinone oxidoreductase that uses light energy to abstract electrons from H(2)O, generating O(2) and a proton gradient subsequently used for ATP formation. It consists of a core antenna complex that captures photons, and an electron transfer chain that converts photonic excitation into a charge separation. This subunit is found at the monomer-monomer interface. The sequence is that of Photosystem II reaction center protein M from Cucumis sativus (Cucumber).